Reading from the N-terminus, the 210-residue chain is CASP-like protein 3A1 (210 aa).

At 1–44 the chain is on the cytoplasmic side; it reads MNGLKTPPEIGIQLPEAKVAAETGTMSGPLVPPRSDRSVRRGTD. The helical transmembrane segment at 45–65 threads the bilayer; that stretch reads VAHVVLRFVCLLTSVIALSLM. The Extracellular portion of the chain corresponds to 66–94; it reads ATAKEAASISIYGFLLPVSSKWSFSDSFE. A helical membrane pass occupies residues 95-115; the sequence is YLVGVSAAVAAHALLQLIISV. Topologically, residues 116–130 are cytoplasmic; that stretch reads SRLLRKSPVIPSRNH. The chain crosses the membrane as a helical span at residues 131-151; sequence AWLIFAGDQAFAYAMLSAGSA. The Extracellular segment spans residues 152–185; the sequence is ASGVTNLNRTGIRHSPLPNFCKPLRSFCDHVAAS. Asparagine 159 carries N-linked (GlcNAc...) asparagine glycosylation. Residues 186–206 traverse the membrane as a helical segment; sequence IAFTFFSCFLLATSAILDVIW. At 207–210 the chain is on the cytoplasmic side; the sequence is LSKY.

Belongs to the Casparian strip membrane proteins (CASP) family. As to quaternary structure, homodimer and heterodimers.

The protein resides in the cell membrane. This is CASP-like protein 3A1 from Vitis vinifera (Grape).